Consider the following 356-residue polypeptide: Heat-inducible transcription repressor HrcA (356 aa).

Belongs to the HrcA family.

Functionally, negative regulator of class I heat shock genes (grpE-dnaK-dnaJ and groELS operons). Prevents heat-shock induction of these operons. In Chelativorans sp. (strain BNC1), this protein is Heat-inducible transcription repressor HrcA.